The sequence spans 229 residues: Heptaprenylglyceryl phosphate synthase (229 aa).

Lys-12 is a binding site for sn-glycerol 1-phosphate. Mg(2+)-binding residues include Asp-14 and Ser-40. Residues Tyr-159–Gly-164, Gly-189, and Gly-209–Asn-210 contribute to the sn-glycerol 1-phosphate site.

Belongs to the GGGP/HepGP synthase family. Group I subfamily. Homodimer. Mg(2+) is required as a cofactor.

The enzyme catalyses sn-glycerol 1-phosphate + all-trans-heptaprenyl diphosphate = 3-heptaprenyl-sn-glycero-1-phosphate + diphosphate. Its pathway is membrane lipid metabolism; glycerophospholipid metabolism. Prenyltransferase that catalyzes in vivo the transfer of the heptaprenyl moiety of heptaprenyl pyrophosphate (HepPP; 35 carbon atoms) to the C3 hydroxyl of sn-glycerol-1-phosphate (G1P), producing heptaprenylglyceryl phosphate (HepGP). This reaction is an ether-bond-formation step in the biosynthesis of archaea-type G1P-based membrane lipids found in Bacillales. The chain is Heptaprenylglyceryl phosphate synthase from Bacillus cereus (strain G9842).